The chain runs to 215 residues: Cytochrome b6 (215 aa).

Residues 32–52 (IFYCLGGITLTCFIVQVATGF) form a helical membrane-spanning segment. C35 serves as a coordination point for heme c. Residues H86 and H100 each coordinate heme b. 3 helical membrane-spanning segments follow: residues 90-110 (ASMM…TGGF), 116-136 (LTWV…VTGY), and 186-206 (AHTF…FVMI). H187 and H202 together coordinate heme b.

This sequence belongs to the cytochrome b family. PetB subfamily. The 4 large subunits of the cytochrome b6-f complex are cytochrome b6, subunit IV (17 kDa polypeptide, PetD), cytochrome f and the Rieske protein, while the 4 small subunits are PetG, PetL, PetM and PetN. The complex functions as a dimer. Heme b serves as cofactor. Heme c is required as a cofactor.

It localises to the plastid. Its subcellular location is the chloroplast thylakoid membrane. Component of the cytochrome b6-f complex, which mediates electron transfer between photosystem II (PSII) and photosystem I (PSI), cyclic electron flow around PSI, and state transitions. This is Cytochrome b6 from Emiliania huxleyi (Coccolithophore).